We begin with the raw amino-acid sequence, 397 residues long: ATP phosphoribosyltransferase regulatory subunit (397 aa).

The protein belongs to the class-II aminoacyl-tRNA synthetase family. HisZ subfamily. In terms of assembly, heteromultimer composed of HisG and HisZ subunits.

Its subcellular location is the cytoplasm. Its pathway is amino-acid biosynthesis; L-histidine biosynthesis; L-histidine from 5-phospho-alpha-D-ribose 1-diphosphate: step 1/9. Required for the first step of histidine biosynthesis. May allow the feedback regulation of ATP phosphoribosyltransferase activity by histidine. This is ATP phosphoribosyltransferase regulatory subunit from Halalkalibacterium halodurans (strain ATCC BAA-125 / DSM 18197 / FERM 7344 / JCM 9153 / C-125) (Bacillus halodurans).